The sequence spans 336 residues: F420-dependent glucose-6-phosphate dehydrogenase (336 aa).

Residue aspartate 39 coordinates coenzyme F420-(gamma-Glu)n. The active-site Proton donor is the histidine 40. Residues threonine 76 and 107 to 108 each bind coenzyme F420-(gamma-Glu)n; that span reads TG. Glutamate 109 (proton acceptor) is an active-site residue. Coenzyme F420-(gamma-Glu)n is bound by residues asparagine 112, 177–178, and 180–181; these read GG and AV. Substrate-binding residues include threonine 195, lysine 198, lysine 259, and arginine 283.

The protein belongs to the F420-dependent glucose-6-phosphate dehydrogenase family. In terms of assembly, homodimer.

The catalysed reaction is oxidized coenzyme F420-(gamma-L-Glu)(n) + D-glucose 6-phosphate + H(+) = 6-phospho-D-glucono-1,5-lactone + reduced coenzyme F420-(gamma-L-Glu)(n). Catalyzes the coenzyme F420-dependent oxidation of glucose 6-phosphate (G6P) to 6-phosphogluconolactone. Appears to have a role in resistance to oxidative stress, via its consumption of G6P that serves as a source of reducing power to combat oxidative stress in mycobacteria. More precisely, is likely involved in a F420-dependent anti-oxidant mechanism that protects M.tuberculosis against oxidative stress and bactericidal agents. Functionally, is essential for the bioreductive activation of the bicyclic 4-nitroimidazole prodrug PA-824 (nitroimidazo-oxazine) developed for anti-tuberculosis therapy against both replicating and persistent bacteria. It does not interact directly with PA-824 but, rather, provides reduced F420 to the deazaflavin-dependent nitroreductase Ddn, which in turn activates PA-824. This Mycobacterium tuberculosis (strain CDC 1551 / Oshkosh) protein is F420-dependent glucose-6-phosphate dehydrogenase (fgd1).